A 364-amino-acid polypeptide reads, in one-letter code: E3 ubiquitin-protein ligase rnf146 (364 aa).

Positions 18 to 37 (KKVSGEAVPEGSGSPSSPSL) are disordered. The span at 22–34 (GEAVPEGSGSPSS) shows a compositional bias: low complexity. The segment at 42–80 (CPICLQSCVHPVRLPCRHIFCFLCVKGASWHSKRCALCR) adopts an RING-type zinc-finger fold. In terms of domain architecture, WWE spans 102-178 (SATGGCGTGS…EHGRRRRMKR (77 aa)). A glycoprotein is bound by residues tyrosine 118, arginine 121, tryptophan 125, tyrosine 155, glutamine 164, arginine 174, and lysine 186. Disordered regions lie at residues 217–262 (AAAE…PASS) and 279–364 (NEQE…VTKV). Acidic residues-rich tracts occupy residues 281-295 (QEPE…DDSA) and 308-322 (TSDD…DENE).

Its subcellular location is the cytoplasm. The protein localises to the cytosol. It is found in the nucleus. The enzyme catalyses S-ubiquitinyl-[E2 ubiquitin-conjugating enzyme]-L-cysteine + [acceptor protein]-L-lysine = [E2 ubiquitin-conjugating enzyme]-L-cysteine + N(6)-ubiquitinyl-[acceptor protein]-L-lysine.. It functions in the pathway protein modification; protein ubiquitination. Functionally, E3 ubiquitin-protein ligase that specifically binds poly-ADP-ribosylated proteins and mediates their ubiquitination and subsequent degradation. May regulate many important biological processes, such as cell survival and DNA damage response. Acts as an activator of the Wnt signaling pathway by mediating the ubiquitination of poly-ADP-ribosylated proteins. Neuroprotective protein. Protects against cell death induced by DNA damaging agents and rescues cells from G1 arrest. Promotes cell survival after gamma-irradiation. Facilitates DNA repair. The protein is E3 ubiquitin-protein ligase rnf146 (rnf146) of Danio rerio (Zebrafish).